The sequence spans 203 residues: Guanylate kinase (203 aa).

Residues Gly-3–Thr-181 enclose the Guanylate kinase-like domain. Residue Ala-10 to Ser-17 participates in ATP binding.

Belongs to the guanylate kinase family.

The protein resides in the cytoplasm. It catalyses the reaction GMP + ATP = GDP + ADP. In terms of biological role, essential for recycling GMP and indirectly, cGMP. This Xanthomonas euvesicatoria pv. vesicatoria (strain 85-10) (Xanthomonas campestris pv. vesicatoria) protein is Guanylate kinase.